The primary structure comprises 358 residues: 2'-5'-oligoadenylate synthase 1A (358 aa).

The interaction with dsRNA stretch occupies residues 14–61 (DKFIEVYLLPNTSFRDDVKSAINVLCDFLKERCFRDTVHPVRVSKVVK). S64 is a binding site for ATP. Residues D76, D78, and D149 each contribute to the Mg(2+) site. The tract at residues 201–211 (QRPTKLKSLIR) is interaction with dsRNA. ATP is bound by residues R211, K214, and Q231.

Belongs to the 2-5A synthase family. Monomer. Homotetramer. Interacts with OAS1D. Requires Mg(2+) as cofactor.

The protein resides in the cytoplasm. Its subcellular location is the mitochondrion. It localises to the nucleus. The protein localises to the microsome. It is found in the endoplasmic reticulum. The enzyme catalyses 3 ATP = 5'-triphosphoadenylyl-(2'-&gt;5')-adenylyl-(2'-&gt;5')-adenosine + 2 diphosphate. Produced as a latent enzyme which is activated by dsRNA generated during the course of viral infection. The dsRNA activator must be at least 15 nucleotides long, and no modification of the 2'-hydroxyl group is tolerated. ssRNA or dsDNA do not act as activators. In terms of biological role, interferon-induced, dsRNA-activated antiviral enzyme which plays a critical role in cellular innate antiviral response. In addition, it may also play a role in other cellular processes such as apoptosis, cell growth, differentiation and gene regulation. Synthesizes higher oligomers of 2'-5'-oligoadenylates (2-5A) from ATP which then bind to the inactive monomeric form of ribonuclease L (RNase L) leading to its dimerization and subsequent activation. Activation of RNase L leads to degradation of cellular as well as viral RNA, resulting in the inhibition of protein synthesis, thus terminating viral replication. Can mediate the antiviral effect via the classical RNase L-dependent pathway or an alternative antiviral pathway independent of RNase L. This chain is 2'-5'-oligoadenylate synthase 1A (Oas1a), found in Rattus norvegicus (Rat).